The primary structure comprises 644 residues: Core protein VP4 (644 aa).

The protein belongs to the orbivirus VP4 family.

It localises to the virion. Its function is as follows. The VP4 protein is one of the five proteins (with VP1, VP3, VP6 and VP7) which form the inner capsid of the virus. This Bluetongue virus 11 (isolate USA) (BTV 11) protein is Core protein VP4 (Segment-4).